Here is a 405-residue protein sequence, read N- to C-terminus: Arginine deiminase (405 aa).

The active-site Amidino-cysteine intermediate is cysteine 395.

The protein belongs to the arginine deiminase family.

The protein localises to the cytoplasm. It carries out the reaction L-arginine + H2O = L-citrulline + NH4(+). Its pathway is amino-acid degradation; L-arginine degradation via ADI pathway; carbamoyl phosphate from L-arginine: step 1/2. In Rhodococcus jostii (strain RHA1), this protein is Arginine deiminase.